The primary structure comprises 562 residues: Tripeptidyl-peptidase 1 (562 aa).

The first 19 residues, 1 to 19, serve as a signal peptide directing secretion; sequence MGLQARLLGLLALVIAGKC. Positions 20–194 are cleaved as a propeptide — removed in mature form; that stretch reads TYNPEPDQRW…PEPQQVGTVS (175 aa). Cysteine 111 and cysteine 122 are joined by a disulfide. The Peptidase S53 domain maps to 198-562; the sequence is GVTPSVLRQR…PALLKTLLNP (365 aa). N-linked (GlcNAc...) asparagine glycosylation is present at asparagine 209. A glycan (N-linked (GlcNAc...) (high mannose) asparagine) is linked at asparagine 221. Active-site charge relay system residues include glutamate 271 and aspartate 275. Residues asparagine 285, asparagine 312, and asparagine 442 are each glycosylated (N-linked (GlcNAc...) asparagine). 2 disulfides stabilise this stretch: cysteine 364–cysteine 525 and cysteine 521–cysteine 536. Serine 474 serves as the catalytic Charge relay system. Positions 516 and 517 each coordinate Ca(2+). Ca(2+)-binding residues include glycine 538, glycine 540, and aspartate 542.

In terms of assembly, monomer. Interacts with CLN5. Interacts with CLN3. The cofactor is Ca(2+). In terms of processing, activated by autocatalytic proteolytical processing upon acidification. N-glycosylation is required for processing and activity.

It localises to the lysosome. It is found in the melanosome. The catalysed reaction is Release of an N-terminal tripeptide from a polypeptide, but also has endopeptidase activity.. Lysosomal serine protease with tripeptidyl-peptidase I activity. May act as a non-specific lysosomal peptidase which generates tripeptides from the breakdown products produced by lysosomal proteinases. Requires substrates with an unsubstituted N-terminus. In Mus musculus (Mouse), this protein is Tripeptidyl-peptidase 1 (Tpp1).